The following is a 115-amino-acid chain: Rubredoxin (115 aa).

The Rubredoxin-like domain maps to 15–66; it reads SPNHECRACGYVYIPSQGDQKTSVSPGTPFEALPLNWKCPVCGAPRNYFIST. 4 residues coordinate Fe cation: cysteine 20, cysteine 23, cysteine 53, and cysteine 56.

The protein belongs to the rubredoxin family. Fe(3+) serves as cofactor.

In terms of biological role, rubredoxin is a small nonheme, iron protein lacking acid-labile sulfide. Its single Fe, chelated to 4 Cys, functions as an electron acceptor and may also stabilize the conformation of the molecule. Could be involved in hydrogenase-linked redox processes. The polypeptide is Rubredoxin (rub) (Synechocystis sp. (strain ATCC 27184 / PCC 6803 / Kazusa)).